The primary structure comprises 362 residues: Putative sphingolipid delta(4)-desaturase/C4-monooxygenase (362 aa).

A run of 3 helical transmembrane segments spans residues 45 to 61 (YVVSSLVIFQIFMCWLL), 71 to 91 (LEAYFCGGIINHAMTLAIHDI), and 107 to 127 (FFGMWANLPIAVPISVSFKKY). The Histidine box-1 signature appears at 89–93 (HDISH). Residues 128-132 (HVEHH) carry the Histidine box-2 motif. The next 2 helical transmembrane spans lie at 160–177 (LLWLALQPFFYGFRPLII) and 198–218 (LLILHFFGVKSLFYLLFGTII). The Histidine box-3 motif lies at 259–263 (HVEHH).

Belongs to the fatty acid desaturase type 1 family. DEGS subfamily.

It is found in the membrane. The catalysed reaction is an N-acyl-15-methylhexadecasphinganine + 2 Fe(II)-[cytochrome b5] + O2 + 2 H(+) = an N-acyl-4-hydroxy-15-methylhexadecasphinganine + 2 Fe(III)-[cytochrome b5] + H2O. It carries out the reaction an N-acyl-15-methylhexadecasphinganine + 2 Fe(II)-[cytochrome b5] + O2 + 2 H(+) = an N-acyl-15-methylhexadecasphing-4-enine + 2 Fe(III)-[cytochrome b5] + 2 H2O. It catalyses the reaction a dihydroceramide + 2 Fe(II)-[cytochrome b5] + O2 + 2 H(+) = a phytoceramide + 2 Fe(III)-[cytochrome b5] + H2O. The enzyme catalyses an N-acylsphinganine + 2 Fe(II)-[cytochrome b5] + O2 + 2 H(+) = an N-acylsphing-4-enine + 2 Fe(III)-[cytochrome b5] + 2 H2O. The catalysed reaction is N-octanoylsphinganine + 2 Fe(II)-[cytochrome b5] + O2 + 2 H(+) = N-octanoyl-4-hydroxysphinganine + 2 Fe(III)-[cytochrome b5] + H2O. It carries out the reaction an N-acylsphinganine + 2 Fe(II)-[cytochrome b5] + O2 + 2 H(+) = an N-acyl-(4R)-4-hydroxysphinganine + 2 Fe(III)-[cytochrome b5] + H2O. It functions in the pathway lipid metabolism; sphingolipid metabolism. In terms of biological role, bifunctional enzyme which acts both as a sphingolipid delta(4)-desaturase and a sphingolipid C4-monooxygenase. C.elegans contain specific sphingoid bases, which are unique or different in structure compared to the sphingoid bases found in other animals. Two examples of these distinctive compounds are: 15-methylhexadecasphinganine and 15-methylhexadecasphing-4-enine and this enzyme can catalyze their conversion. The protein is Putative sphingolipid delta(4)-desaturase/C4-monooxygenase (ttm-5) of Caenorhabditis elegans.